A 254-amino-acid polypeptide reads, in one-letter code: uncharacterized protein (254 aa).

This is an uncharacterized protein from Acheta domesticus (House cricket).